Reading from the N-terminus, the 57-residue chain is Enolase (57 aa).

Glu25 serves as the catalytic Proton donor.

Belongs to the enolase family. Mg(2+) serves as cofactor.

It is found in the cytoplasm. The protein resides in the secreted. The protein localises to the cell surface. It carries out the reaction (2R)-2-phosphoglycerate = phosphoenolpyruvate + H2O. It participates in carbohydrate degradation; glycolysis; pyruvate from D-glyceraldehyde 3-phosphate: step 4/5. In terms of biological role, catalyzes the reversible conversion of 2-phosphoglycerate (2-PG) into phosphoenolpyruvate (PEP). It is essential for the degradation of carbohydrates via glycolysis. The chain is Enolase from Clostridioides difficile (Peptoclostridium difficile).